We begin with the raw amino-acid sequence, 489 residues long: Probable 26S proteasome non-ATPase regulatory subunit 3 (489 aa).

The disordered stretch occupies residues Met-1–Thr-23. The PCI domain occupies Cys-241–Asp-422. The interval Pro-454 to Phe-489 is disordered. A compositionally biased stretch (basic and acidic residues) spans Ser-457–Ala-482.

Belongs to the proteasome subunit S3 family. The 26S proteasome is composed of a core protease, known as the 20S proteasome, capped at one or both ends by the 19S regulatory complex (RC). The RC is composed of at least 18 different subunits in two subcomplexes, the base and the lid, which form the portions proximal and distal to the 20S proteolytic core, respectively.

It is found in the nucleus. Functionally, acts as a regulatory subunit of the 26 proteasome which is involved in the ATP-dependent degradation of ubiquitinated proteins. This chain is Probable 26S proteasome non-ATPase regulatory subunit 3 (21D7), found in Daucus carota (Wild carrot).